Consider the following 205-residue polypeptide: Holliday junction branch migration complex subunit RuvA (205 aa).

The interval 1–62 (MFEYVTGYVE…EDIMALYGFK (62 aa)) is domain I. A domain II region spans residues 63-141 (TREERLLFTK…DVVPDAFVDL (79 aa)). Positions 142 to 152 (FSDEERFDEKK) are flexible linker. Positions 153 to 205 (GSSAELDEALEALRALGYAEREVSRVVPELLKESLTTDQYIKKALSLLLNGKR) are domain III.

It belongs to the RuvA family. Homotetramer. Forms an RuvA(8)-RuvB(12)-Holliday junction (HJ) complex. HJ DNA is sandwiched between 2 RuvA tetramers; dsDNA enters through RuvA and exits via RuvB. An RuvB hexamer assembles on each DNA strand where it exits the tetramer. Each RuvB hexamer is contacted by two RuvA subunits (via domain III) on 2 adjacent RuvB subunits; this complex drives branch migration. In the full resolvosome a probable DNA-RuvA(4)-RuvB(12)-RuvC(2) complex forms which resolves the HJ.

The protein resides in the cytoplasm. The RuvA-RuvB-RuvC complex processes Holliday junction (HJ) DNA during genetic recombination and DNA repair, while the RuvA-RuvB complex plays an important role in the rescue of blocked DNA replication forks via replication fork reversal (RFR). RuvA specifically binds to HJ cruciform DNA, conferring on it an open structure. The RuvB hexamer acts as an ATP-dependent pump, pulling dsDNA into and through the RuvAB complex. HJ branch migration allows RuvC to scan DNA until it finds its consensus sequence, where it cleaves and resolves the cruciform DNA. The sequence is that of Holliday junction branch migration complex subunit RuvA from Bacillus cereus (strain AH187).